Here is a 357-residue protein sequence, read N- to C-terminus: Adenosine deaminase (357 aa).

Zn(2+) is bound by residues H16 and H18. Substrate is bound by residues H18, D20, and G185. Residue H212 participates in Zn(2+) binding. E215 functions as the Proton donor in the catalytic mechanism. Residue D294 participates in Zn(2+) binding. D295 provides a ligand contact to substrate.

Belongs to the metallo-dependent hydrolases superfamily. Adenosine and AMP deaminases family. It depends on Zn(2+) as a cofactor.

The protein resides in the cell membrane. It is found in the cell junction. It localises to the cytoplasmic vesicle lumen. The protein localises to the cytoplasm. Its subcellular location is the lysosome. It carries out the reaction adenosine + H2O + H(+) = inosine + NH4(+). The enzyme catalyses 2'-deoxyadenosine + H2O + H(+) = 2'-deoxyinosine + NH4(+). Catalyzes the hydrolytic deamination of adenosine and 2-deoxyadenosine. Plays an important role in purine metabolism and in adenosine homeostasis. Modulates signaling by extracellular adenosine, and so contributes indirectly to cellular signaling events. May act as a positive regulator of T-cell coactivation. The chain is Adenosine deaminase (ADA) from Gallus gallus (Chicken).